We begin with the raw amino-acid sequence, 86 residues long: Small ribosomal subunit protein uS17 (86 aa).

It belongs to the universal ribosomal protein uS17 family. In terms of assembly, part of the 30S ribosomal subunit.

Functionally, one of the primary rRNA binding proteins, it binds specifically to the 5'-end of 16S ribosomal RNA. This Streptococcus gordonii (strain Challis / ATCC 35105 / BCRC 15272 / CH1 / DL1 / V288) protein is Small ribosomal subunit protein uS17.